A 285-amino-acid polypeptide reads, in one-letter code: Eukaryotic translation initiation factor 3 subunit F-2 (285 aa).

Residues 11-145 (VLIKPLVLFQ…TRLYCAVEIG (135 aa)) form the MPN domain.

This sequence belongs to the eIF-3 subunit F family. Component of the eukaryotic translation initiation factor 3 (eIF-3) complex. The eIF-3 complex interacts with pix.

Its subcellular location is the cytoplasm. Component of the eukaryotic translation initiation factor 3 (eIF-3) complex, which is involved in protein synthesis of a specialized repertoire of mRNAs and, together with other initiation factors, stimulates binding of mRNA and methionyl-tRNAi to the 40S ribosome. The eIF-3 complex specifically targets and initiates translation of a subset of mRNAs involved in cell proliferation. This is Eukaryotic translation initiation factor 3 subunit F-2 from Drosophila erecta (Fruit fly).